The chain runs to 659 residues: tRNA (guanine(26)-N(2))-dimethyltransferase (659 aa).

The transit peptide at 1-23 (MQGSSLWLSLTFRSARVLSRARF) directs the protein to the mitochondrion. A Trm1 methyltransferase domain is found at 55–499 (TTVTEGAAKI…APASALWDIM (445 aa)). Arg82 contacts S-adenosyl-L-methionine. At Ser120 the chain carries Phosphoserine. S-adenosyl-L-methionine contacts are provided by Arg166 and Asp184. Positions 348, 351, 384, and 387 each coordinate Zn(2+). Ser517 carries the phosphoserine modification. Disordered regions lie at residues 537–578 (EDAN…AMEE) and 616–659 (RGDQ…PGID). The short motif at 543–575 (SRQRGLKRFQANPEANWGPRPRARPGGKAADEA) is the Nuclear localization signal element. The segment at 600–627 (RLKTFPCKRFKEGTCQRGDQCCYSHSPP) adopts a C3H1-type zinc-finger fold. Residue Ser625 is modified to Phosphoserine. A phosphothreonine mark is found at Thr628 and Thr646.

Belongs to the class I-like SAM-binding methyltransferase superfamily. Trm1 family. (Microbial infection) Cleaved between Gln-530 and Ala-531 by the 3C-like proteinase nsp5 from human coronavirus SARS-CoV-2, leading to its inactivation.

Its subcellular location is the mitochondrion. It localises to the nucleus. It is found in the cytoplasm. It catalyses the reaction guanosine(26) in tRNA + 2 S-adenosyl-L-methionine = N(2)-dimethylguanosine(26) in tRNA + 2 S-adenosyl-L-homocysteine + 2 H(+). Dimethylates a single guanine residue at position 26 of most nuclear- and mitochondrial-encoded tRNAs using S-adenosyl-L-methionine as donor of the methyl groups. tRNA guanine(26)-dimethylation is required for redox homeostasis and ensure proper cellular proliferation and oxidative stress survival. The chain is tRNA (guanine(26)-N(2))-dimethyltransferase from Homo sapiens (Human).